Here is a 736-residue protein sequence, read N- to C-terminus: NADPH--cytochrome P450 reductase (736 aa).

M1 is a topological domain (lumenal). The helical transmembrane segment at 2–24 threads the bilayer; that stretch reads AVSSSSDVIVLSVGIILAALYLF. Topologically, residues 25 to 736 are cytoplasmic; the sequence is REQIFSAAKP…RNRLLLDVWS (712 aa). In terms of domain architecture, Flavodoxin-like spans 66 to 216; it reads IVIFYGSQTG…DYLEWKDGMW (151 aa). FMN-binding positions include 72–77, 123–126, 165–174, and D200; these read SQTGTA, ATYG, and LGNKTYEHYN. Positions 269-546 constitute an FAD-binding FR-type domain; sequence KNPYPAPIIA…EGPRGAYKQG (278 aa). Residue R289 participates in NADP(+) binding. Residues 456–459, 474–476, Y480, and 495–498 contribute to the FAD site; these read RYYS, TVV, and GVGS. NADP(+) contacts are provided by residues T577, 648–649, and 659–663; these read SR and KIYVQ. W735 is an FAD binding site.

It belongs to the NADPH--cytochrome P450 reductase family. This sequence in the N-terminal section; belongs to the flavodoxin family. In the C-terminal section; belongs to the flavoprotein pyridine nucleotide cytochrome reductase family. Requires FAD as cofactor. FMN is required as a cofactor.

Its subcellular location is the endoplasmic reticulum membrane. The protein resides in the mitochondrion outer membrane. It localises to the cell membrane. The enzyme catalyses 2 oxidized [cytochrome P450] + NADPH = 2 reduced [cytochrome P450] + NADP(+) + H(+). Its function is as follows. This enzyme is required for electron transfer from NADP to cytochrome P450 in microsomes. It can also provide electron transfer to heme oxygenase and cytochrome B5. Involved in ergosterol biosynthesis. In Phanerodontia chrysosporium (White-rot fungus), this protein is NADPH--cytochrome P450 reductase (CPR).